Consider the following 337-residue polypeptide: MASIHRPKRGSLAFSPRKRAKSHIPRFRAWPEATGEPKLQSFAGYKVGMTHVIMVDDIKNSLTQGMEISVPVTVIETPAIRVAAVRAYTEDSTGEKAIAEAWAADLDSELKRRIPIPAAGNQAEGLENIGKLIEEGRVSDIRAVTYTLPKSLTGVPKKVPDIMESGISAKDLGAKFEYAKSILGNLVNVTDVFKNGTVVDTAAITIGKGTQGPVKRWGIQLQKGKHSRQGSLRQIGTLGSFNPSRVSWRVPQMGQMGYHQRTEFNKRILKIGSDGEEVTPEGGFINYGLVRGDYVLIKGSVPGPSKRLIRLRDPIRAKKADLGEPNILYISRESKQG.

A disordered region spans residues 1-20 (MASIHRPKRGSLAFSPRKRA).

It belongs to the universal ribosomal protein uL3 family. Part of the 50S ribosomal subunit. Forms a cluster with proteins L14 and L24e.

One of the primary rRNA binding proteins, it binds directly near the 3'-end of the 23S rRNA, where it nucleates assembly of the 50S subunit. The sequence is that of Large ribosomal subunit protein uL3 from Methanosarcina mazei (strain ATCC BAA-159 / DSM 3647 / Goe1 / Go1 / JCM 11833 / OCM 88) (Methanosarcina frisia).